The primary structure comprises 323 residues: Aspartate carbamoyltransferase catalytic subunit (323 aa).

Positions 71 and 72 each coordinate carbamoyl phosphate. Lys99 provides a ligand contact to L-aspartate. Arg121, His151, and Gln154 together coordinate carbamoyl phosphate. Residues Arg184 and Arg239 each coordinate L-aspartate. Residues Gly280 and Pro281 each coordinate carbamoyl phosphate.

It belongs to the aspartate/ornithine carbamoyltransferase superfamily. ATCase family. Heterododecamer (2C3:3R2) of six catalytic PyrB chains organized as two trimers (C3), and six regulatory PyrI chains organized as three dimers (R2).

It carries out the reaction carbamoyl phosphate + L-aspartate = N-carbamoyl-L-aspartate + phosphate + H(+). It functions in the pathway pyrimidine metabolism; UMP biosynthesis via de novo pathway; (S)-dihydroorotate from bicarbonate: step 2/3. Its function is as follows. Catalyzes the condensation of carbamoyl phosphate and aspartate to form carbamoyl aspartate and inorganic phosphate, the committed step in the de novo pyrimidine nucleotide biosynthesis pathway. This chain is Aspartate carbamoyltransferase catalytic subunit, found in Cupriavidus taiwanensis (strain DSM 17343 / BCRC 17206 / CCUG 44338 / CIP 107171 / LMG 19424 / R1) (Ralstonia taiwanensis (strain LMG 19424)).